The chain runs to 377 residues: uncharacterized protein (377 aa).

Residues 1–46 (MLAGLRRRGSMTTPPGPEIPPPHQGGFYSAGHHPQRPWPETPPPKT) form a disordered region. Pro residues-rich tracts occupy residues 14 to 23 (PPGPEIPPPH) and 36 to 45 (RPWPETPPPK). Residues 53–73 (MLGAVALLAVVGVTVAVTLAV) traverse the membrane as a helical segment. Residues 77 to 107 (DKRDAIPPGSGVSGSPTASDIASADDSGPVS) are disordered.

It localises to the cell inner membrane. In terms of biological role, may be involved in the ESX-1 / type VII specialized secretion system (T7SS), which exports several proteins including EsxA and EsxB. Involved in DNA conjugation in the recipient strain. This is an uncharacterized protein from Mycolicibacterium smegmatis (strain MKD8) (Mycobacterium smegmatis).